Here is a 245-residue protein sequence, read N- to C-terminus: Cytochrome P450 CYP82H23 (245 aa).

The protein belongs to the cytochrome P450 family. It depends on heme as a cofactor.

Its function is as follows. Probable heme-thiolate monooxygenase. The polypeptide is Cytochrome P450 CYP82H23 (Panax ginseng (Korean ginseng)).